The chain runs to 492 residues: 2,3-bisphosphoglycerate-independent phosphoglycerate mutase (492 aa).

2 residues coordinate Mn(2+): Asp-11 and Ser-61. Ser-61 serves as the catalytic Phosphoserine intermediate. Residues His-118, 147–148, Arg-177, Arg-183, 248–251, and Lys-321 contribute to the substrate site; these read RD and RNDR. Mn(2+)-binding residues include Asp-387, His-391, Asp-428, His-429, and His-446.

It belongs to the BPG-independent phosphoglycerate mutase family. As to quaternary structure, monomer. Requires Mn(2+) as cofactor.

It carries out the reaction (2R)-2-phosphoglycerate = (2R)-3-phosphoglycerate. The protein operates within carbohydrate degradation; glycolysis; pyruvate from D-glyceraldehyde 3-phosphate: step 3/5. Its function is as follows. Catalyzes the interconversion of 2-phosphoglycerate and 3-phosphoglycerate. This Helicobacter acinonychis (strain Sheeba) protein is 2,3-bisphosphoglycerate-independent phosphoglycerate mutase.